The chain runs to 486 residues: Malonate-semialdehyde dehydrogenase (486 aa).

NAD(+) is bound by residues phenylalanine 154, lysine 178, glutamate 181, arginine 182, and serine 231. The Nucleophile role is filled by cysteine 286. Glutamate 386 serves as a coordination point for NAD(+).

This sequence belongs to the aldehyde dehydrogenase family. IolA subfamily. Homotetramer.

The enzyme catalyses 3-oxopropanoate + NAD(+) + CoA + H2O = hydrogencarbonate + acetyl-CoA + NADH + H(+). It catalyses the reaction 2-methyl-3-oxopropanoate + NAD(+) + CoA + H2O = propanoyl-CoA + hydrogencarbonate + NADH + H(+). The protein operates within polyol metabolism; myo-inositol degradation into acetyl-CoA; acetyl-CoA from myo-inositol: step 7/7. Its function is as follows. Catalyzes the oxidation of malonate semialdehyde (MSA) and methylmalonate semialdehyde (MMSA) into acetyl-CoA and propanoyl-CoA, respectively. Is involved in a myo-inositol catabolic pathway. Bicarbonate, and not CO2, is the end-product of the enzymatic reaction. The sequence is that of Malonate-semialdehyde dehydrogenase from Bacillus cereus (strain ATCC 14579 / DSM 31 / CCUG 7414 / JCM 2152 / NBRC 15305 / NCIMB 9373 / NCTC 2599 / NRRL B-3711).